The sequence spans 169 residues: Putative phosphoesterase SH1944 (169 aa).

His34 (proton donor) is an active-site residue. 2 consecutive short sequence motifs (HXTX) follow at residues 34 to 37 (HITI) and 115 to 118 (HFTI). The active-site Proton acceptor is His115.

Belongs to the 2H phosphoesterase superfamily. YjcG family.

This chain is Putative phosphoesterase SH1944, found in Staphylococcus haemolyticus (strain JCSC1435).